Reading from the N-terminus, the 116-residue chain is Vesicle-associated membrane protein 5 (116 aa).

Residues 1–72 (MAGIELERCQ…CWENIRYRIC (72 aa)) lie on the Cytoplasmic side of the membrane. Residues 5-65 (ELERCQQQAN…QNLAQKKCWE (61 aa)) form the v-SNARE coiled-coil homology domain. 3 positions are modified to phosphoserine: S41, S48, and S49. A helical; Anchor for type IV membrane protein membrane pass occupies residues 73–93 (VGLVVVGVLLIILIVLLVVFL). Residues 94-116 (PQSSDSSSAPRTQDAGIASGPGN) are Vesicular-facing. The segment at 96-116 (SSDSSSAPRTQDAGIASGPGN) is disordered.

This sequence belongs to the synaptobrevin family. (Microbial infection) Targeted and hydrolyzed by C.botulinum neurotoxin type X (BoNT/X) which hydrolyzes the 40-Arg-|-Ser-41 bond and probably inhibits neurotransmitter release. It remains unknown whether BoNT/X is ever produced, or what organisms it targets.

It is found in the cell membrane. The protein localises to the endomembrane system. It localises to the golgi apparatus. Its subcellular location is the trans-Golgi network membrane. Its function is as follows. May participate in trafficking events that are associated with myogenesis, such as myoblast fusion and/or GLUT4 trafficking. The protein is Vesicle-associated membrane protein 5 (VAMP5) of Homo sapiens (Human).